We begin with the raw amino-acid sequence, 103 residues long: Signal recognition particle 19 kDa protein (103 aa).

The protein belongs to the SRP19 family. As to quaternary structure, part of the signal recognition particle protein translocation system, which is composed of SRP and FtsY. Archaeal SRP consists of a 7S RNA molecule of 300 nucleotides and two protein subunits: SRP54 and SRP19.

It localises to the cytoplasm. In terms of biological role, involved in targeting and insertion of nascent membrane proteins into the cytoplasmic membrane. Binds directly to 7S RNA and mediates binding of the 54 kDa subunit of the SRP. The polypeptide is Signal recognition particle 19 kDa protein (Hyperthermus butylicus (strain DSM 5456 / JCM 9403 / PLM1-5)).